The following is a 435-amino-acid chain: Eukaryotic translation initiation factor 3 subunit E (435 aa).

One can recognise a PCI domain in the interval 219-392 (FFNHAKGRDL…GHVVMGTQPL (174 aa)).

Belongs to the eIF-3 subunit E family. In terms of assembly, component of the eukaryotic translation initiation factor 3 (eIF-3) complex.

It localises to the cytoplasm. Functionally, component of the eukaryotic translation initiation factor 3 (eIF-3) complex, which is involved in protein synthesis of a specialized repertoire of mRNAs and, together with other initiation factors, stimulates binding of mRNA and methionyl-tRNAi to the 40S ribosome. The eIF-3 complex specifically targets and initiates translation of a subset of mRNAs involved in cell proliferation. This is Eukaryotic translation initiation factor 3 subunit E (eIF3-S6) from Culex quinquefasciatus (Southern house mosquito).